The sequence spans 123 residues: Protein Wnt-3b (123 aa).

Residue Ser-1 is the site of O-palmitoleoyl serine; by PORCN attachment. Cys-89 and Cys-104 form a disulfide bridge. Asn-90 is a glycosylation site (N-linked (GlcNAc...) asparagine).

It belongs to the Wnt family. Post-translationally, palmitoleoylation is required for efficient binding to frizzled receptors. Depalmitoleoylation leads to Wnt signaling pathway inhibition.

The protein localises to the secreted. The protein resides in the extracellular space. Its subcellular location is the extracellular matrix. Its function is as follows. Ligand for members of the frizzled family of seven transmembrane receptors. Probable developmental protein. May be a signaling molecule which affects the development of discrete regions of tissues. Is likely to signal over only few cell diameters. The polypeptide is Protein Wnt-3b (WNT-3B) (Alopias vulpinus (Common thresher shark)).